A 38-amino-acid polypeptide reads, in one-letter code: Mating hormone A-factor 2 (38 aa).

The span at 1 to 12 (MQPITTASTQAT) shows a compositional bias: polar residues. Residues 1–20 (MQPITTASTQATQKDKSSEK) are disordered. Residues 1 to 23 (MQPITTASTQATQKDKSSEKKDN) constitute a propeptide that is removed on maturation. Position 35 is a cysteine methyl ester (Cys35). Cys35 carries S-farnesyl cysteine lipidation. Positions 36 to 38 (VIA) are cleaved as a propeptide — removed in mature form.

The protein localises to the cell membrane. Its function is as follows. The active factor is excreted into the culture medium by haploid cells of the A mating type and acts on cells of the opposite mating type (type alpha). It mediates the conjugation process between the two types by inhibiting the initiation of DNA synthesis in type alpha cells and synchronizing them with type A. This is Mating hormone A-factor 2 (MFA2) from Saccharomyces cerevisiae (strain ATCC 204508 / S288c) (Baker's yeast).